The following is a 116-amino-acid chain: Large ribosomal subunit protein bL17 (116 aa).

Belongs to the bacterial ribosomal protein bL17 family. Part of the 50S ribosomal subunit. Contacts protein L32.

This Prochlorococcus marinus (strain MIT 9312) protein is Large ribosomal subunit protein bL17.